The primary structure comprises 285 residues: Inositol oxygenase (285 aa).

The disordered stretch occupies residues 1–28 (MKVAADPDPSLVSQRDMEPEAAKDKDSF). Residues 15–28 (RDMEPEAAKDKDSF) show a composition bias toward basic and acidic residues. Position 29 (Arg29) interacts with substrate. Phosphoserine is present on Ser33. 85–87 (DES) provides a ligand contact to substrate. Fe cation-binding residues include His98, His123, and Asp124. Residues Lys127 and 141–142 (GD) contribute to the substrate site. Residues His194, His220, and Asp253 each contribute to the Fe cation site. Residue 220-221 (HS) participates in substrate binding.

Belongs to the myo-inositol oxygenase family. Requires Fe cation as cofactor.

It localises to the cytoplasm. It catalyses the reaction myo-inositol + O2 = D-glucuronate + H2O + H(+). It participates in polyol metabolism; myo-inositol degradation into D-glucuronate; D-glucuronate from myo-inositol: step 1/1. The polypeptide is Inositol oxygenase (MIOX) (Bos taurus (Bovine)).